A 778-amino-acid chain; its full sequence is Ribonucleoside-diphosphate reductase large subunit (778 aa).

Substrate is bound by residues serine 177, 192 to 193 (SC), glycine 221, 419 to 423 (NLCIE), and 613 to 617 (PTATS). Cysteine 193 and cysteine 439 are joined by a disulfide. The active-site Proton acceptor is asparagine 419. Cysteine 421 serves as the catalytic Cysteine radical intermediate. Glutamate 423 functions as the Proton acceptor in the catalytic mechanism.

The protein belongs to the ribonucleoside diphosphate reductase large chain family. As to quaternary structure, heterotetramer composed of a homodimer of the large subunit (R1) and a homodimer of the small subunit (R2). Larger multisubunit protein complex are also active, composed of (R1)n(R2)n.

The enzyme catalyses a 2'-deoxyribonucleoside 5'-diphosphate + [thioredoxin]-disulfide + H2O = a ribonucleoside 5'-diphosphate + [thioredoxin]-dithiol. Under complex allosteric control mediated by deoxynucleoside triphosphates and ATP binding. The type of nucleotide bound at the specificity site determines substrate preference. It seems probable that ATP makes the enzyme reduce CDP and UDP, dGTP favors ADP reduction and dTTP favors GDP reduction. Ribonucleoside-diphosphate reductase holoenzyme provides the precursors necessary for viral DNA synthesis. Allows virus growth in non-dividing cells. Catalyzes the biosynthesis of deoxyribonucleotides from the corresponding ribonucleotides. The chain is Ribonucleoside-diphosphate reductase large subunit from African swine fever virus (isolate Tick/South Africa/Pretoriuskop Pr4/1996) (ASFV).